The primary structure comprises 815 residues: Probable bifunctional folylpolyglutamate synthase/dihydropteroate synthase (815 aa).

The segment at 1–416 is folylpolyglutamate synthase; the sequence is MRYDEAANFL…LVAGSLFAVA (416 aa). 47-53 is a binding site for ATP; the sequence is GSNGKGS. The 251-residue stretch at 553–803 folds into the Pterin-binding domain; sequence TAVMGILNVT…DVPENVAAVR (251 aa). A DHPS region spans residues 555–815; sequence VMGILNVTPD…EATRTGADAE (261 aa). N560 lines the Mg(2+) pocket. (7,8-dihydropterin-6-yl)methyl diphosphate contacts are provided by residues T600, D633, N652, D722, K758, and 791–793; that span reads RVH.

It in the N-terminal section; belongs to the folylpolyglutamate synthase family. This sequence in the C-terminal section; belongs to the DHPS family. Requires Mg(2+) as cofactor.

It catalyses the reaction (6S)-5,6,7,8-tetrahydrofolyl-(gamma-L-Glu)(n) + L-glutamate + ATP = (6S)-5,6,7,8-tetrahydrofolyl-(gamma-L-Glu)(n+1) + ADP + phosphate + H(+). It carries out the reaction (7,8-dihydropterin-6-yl)methyl diphosphate + 4-aminobenzoate = 7,8-dihydropteroate + diphosphate. The protein operates within cofactor biosynthesis; tetrahydrofolylpolyglutamate biosynthesis. It participates in cofactor biosynthesis; tetrahydrofolate biosynthesis; 7,8-dihydrofolate from 2-amino-4-hydroxy-6-hydroxymethyl-7,8-dihydropteridine diphosphate and 4-aminobenzoate: step 1/2. Can complement an H.volcanii mutant strain that is thymidine auxotroph because it lacks the two dihydrofolate reductase genes encoded by hdrA and hdrB. In Halobacterium salinarum (strain ATCC 700922 / JCM 11081 / NRC-1) (Halobacterium halobium), this protein is Probable bifunctional folylpolyglutamate synthase/dihydropteroate synthase (folP).